Consider the following 516-residue polypeptide: Ribonuclease Y (516 aa).

Residues 1-21 (MLIKIVIACVITAIIVALIAW) form a helical membrane-spanning segment. The region spanning 206–269 (TISVVQLPND…ETARIALEKL (64 aa)) is the KH domain. An HD domain is found at 332-425 (ALKHSIEVAI…VQAADTISAA (94 aa)).

Belongs to the RNase Y family.

The protein resides in the cell membrane. Functionally, endoribonuclease that initiates mRNA decay. The sequence is that of Ribonuclease Y from Lachnoclostridium phytofermentans (strain ATCC 700394 / DSM 18823 / ISDg) (Clostridium phytofermentans).